Reading from the N-terminus, the 398-residue chain is Maltoporin (398 aa).

Positions 1-30 (MTDKNNKRLFKVAPLATAIAASLFTVNASA) are cleaved as a signal peptide.

Belongs to the porin LamB (TC 1.B.3) family. Homotrimer formed of three 18-stranded antiparallel beta-barrels, containing three independent channels.

The protein localises to the cell outer membrane. It carries out the reaction beta-maltose(in) = beta-maltose(out). Functionally, involved in the transport of maltose and maltodextrins. This chain is Maltoporin, found in Hahella chejuensis (strain KCTC 2396).